We begin with the raw amino-acid sequence, 171 residues long: Adenine phosphoribosyltransferase (171 aa).

It belongs to the purine/pyrimidine phosphoribosyltransferase family. Homodimer.

The protein localises to the cytoplasm. The catalysed reaction is AMP + diphosphate = 5-phospho-alpha-D-ribose 1-diphosphate + adenine. The protein operates within purine metabolism; AMP biosynthesis via salvage pathway; AMP from adenine: step 1/1. Its function is as follows. Catalyzes a salvage reaction resulting in the formation of AMP, that is energically less costly than de novo synthesis. The chain is Adenine phosphoribosyltransferase from Syntrophotalea carbinolica (strain DSM 2380 / NBRC 103641 / GraBd1) (Pelobacter carbinolicus).